Consider the following 87-residue polypeptide: HssA/B-like protein 55 (87 aa).

Over residues 1-13 (MTILSAITSISRP) the composition is skewed to polar residues. The tract at residues 1-31 (MTILSAITSISRPNKSSKSVVSSNGGSSLSM) is disordered. Over residues 14–31 (NKSSKSVVSSNGGSSLSM) the composition is skewed to low complexity.

It belongs to the hssA/B family.

This Dictyostelium discoideum (Social amoeba) protein is HssA/B-like protein 55 (hssl55).